A 325-amino-acid chain; its full sequence is Putative HTH-type transcriptional regulatory protein HQ_3058A (325 aa).

The HTH cro/C1-type domain maps to 132–186 (LADEREERGWSLGRLATELGVSRRTVSKYEDGMNASIEIAIQLEEVFDEPFSSPL). Residues 143-162 (LGRLATELGVSRRTVSKYED) constitute a DNA-binding region (H-T-H motif). A disordered region spans residues 189-211 (MEGAESVRDSEPTPDDPDPDADD). A compositionally biased stretch (acidic residues) spans 200-211 (PTPDDPDPDADD).

The polypeptide is Putative HTH-type transcriptional regulatory protein HQ_3058A (Haloquadratum walsbyi (strain DSM 16790 / HBSQ001)).